The chain runs to 431 residues: Putative transcription factor R429 (431 aa).

Positions 28–95 (NKFENMSKAL…SIENCSESLD (68 aa)) form a coiled coil. Positions 142-187 (SQQENSSESNNDIVKNGTGGSTSKRKKIQPSNRCSGSKTGKVTETK) are disordered. A compositionally biased stretch (low complexity) spans 143–152 (QQENSSESNN). The span at 170-181 (QPSNRCSGSKTG) shows a compositional bias: polar residues. A zinc finger lies at 218–241 (CSVPDCDGEKILNQNDGYMVCKKC).

It belongs to the nucleo-cytoplasmic large DNA viruses (NCLDVs) VLTF-3 family.

Functionally, putative transcription factor. The sequence is that of Putative transcription factor R429 from Acanthamoeba polyphaga (Amoeba).